A 416-amino-acid chain; its full sequence is ASTRA-associated protein 1 (416 aa).

4 WD repeats span residues 13–54 (KHET…PFAG), 58–95 (ETKAQIIYIKWLNNYLIVLSKDHTLRFLQLHNETAVAI), 111–147 (VYEVPVNTLNFANVVVTHMRESQYRLWCCNTMDSESI), and 234–273 (HYPEPVLSLCYNEREEVILSSSTNDAIGVHALQAHSVNVS).

It belongs to the WD repeat ASA1 family. In terms of assembly, component of the ASTRA chromatin remodeling machinery complex.

It is found in the nucleus. Component of the ASTRA complex involved in chromatin remodeling. The chain is ASTRA-associated protein 1 (ASA1) from Lachancea thermotolerans (strain ATCC 56472 / CBS 6340 / NRRL Y-8284) (Yeast).